Reading from the N-terminus, the 488-residue chain is Zinc metalloproteinase-disintegrin 8 (488 aa).

Residues 1-20 form the signal peptide; it reads MIQVLLVTICLAVFPYQGSS. A propeptide spanning residues 21–191 is cleaved from the precursor; sequence IILESGNVND…KASQLNLPPE (171 aa). One can recognise a Peptidase M12B domain in the interval 198–396; that stretch reads TYIELVVVAD…STTRCLHNEP (199 aa). The Ca(2+) site is built by glutamate 201 and aspartate 285. N-linked (GlcNAc...) asparagine glycosylation occurs at asparagine 296. Disulfide bonds link cysteine 309–cysteine 391, cysteine 349–cysteine 373, and cysteine 351–cysteine 356. Histidine 334 is a Zn(2+) binding site. Glutamate 335 is a catalytic residue. Histidine 338 and histidine 344 together coordinate Zn(2+). Residues cysteine 391, asparagine 394, asparagine 409, glutamate 413, glutamate 416, and aspartate 419 each coordinate Ca(2+). In terms of domain architecture, Disintegrin spans 404–488; sequence PPFCGNYFKE…ADCPRNGLYG (85 aa). Disulfide bonds link cysteine 407-cysteine 426, cysteine 418-cysteine 436, cysteine 420-cysteine 431, cysteine 430-cysteine 453, cysteine 444-cysteine 450, cysteine 449-cysteine 474, and cysteine 462-cysteine 481. A Cell attachment site motif is present at residues 466-468; sequence RGD.

This sequence belongs to the venom metalloproteinase (M12B) family. P-II subfamily. Zn(2+) serves as cofactor. As to expression, expressed by the venom gland.

The protein localises to the secreted. Its function is as follows. Inhibits ADP-induced platelet aggregation (probably by binding integrin alpha-IIb/beta-3 (ITGA2B/ITGB3)) and degrades fibrinogen. The sequence is that of Zinc metalloproteinase-disintegrin 8 from Crotalus adamanteus (Eastern diamondback rattlesnake).